A 68-amino-acid chain; its full sequence is Large ribosomal subunit protein bL35 (68 aa).

It belongs to the bacterial ribosomal protein bL35 family.

The polypeptide is Large ribosomal subunit protein bL35 (Orientia tsutsugamushi (strain Boryong) (Rickettsia tsutsugamushi)).